A 157-amino-acid chain; its full sequence is 2-C-methyl-D-erythritol 2,4-cyclodiphosphate synthase (157 aa).

Residues aspartate 8 and histidine 10 each contribute to the a divalent metal cation site. 4-CDP-2-C-methyl-D-erythritol 2-phosphate is bound by residues 8-10 (DVH) and 34-35 (HS). Histidine 42 serves as a coordination point for a divalent metal cation. 4-CDP-2-C-methyl-D-erythritol 2-phosphate contacts are provided by residues 56–58 (DIG), 132–135 (TTNE), and arginine 142.

It belongs to the IspF family. In terms of assembly, homotrimer. A divalent metal cation is required as a cofactor.

It carries out the reaction 4-CDP-2-C-methyl-D-erythritol 2-phosphate = 2-C-methyl-D-erythritol 2,4-cyclic diphosphate + CMP. The protein operates within isoprenoid biosynthesis; isopentenyl diphosphate biosynthesis via DXP pathway; isopentenyl diphosphate from 1-deoxy-D-xylulose 5-phosphate: step 4/6. Its function is as follows. Involved in the biosynthesis of isopentenyl diphosphate (IPP) and dimethylallyl diphosphate (DMAPP), two major building blocks of isoprenoid compounds. Catalyzes the conversion of 4-diphosphocytidyl-2-C-methyl-D-erythritol 2-phosphate (CDP-ME2P) to 2-C-methyl-D-erythritol 2,4-cyclodiphosphate (ME-CPP) with a corresponding release of cytidine 5-monophosphate (CMP). The protein is 2-C-methyl-D-erythritol 2,4-cyclodiphosphate synthase of Chlorobaculum parvum (strain DSM 263 / NCIMB 8327) (Chlorobium vibrioforme subsp. thiosulfatophilum).